The sequence spans 242 residues: Phosphoribosylaminoimidazole-succinocarboxamide synthase (242 aa).

Belongs to the SAICAR synthetase family.

It catalyses the reaction 5-amino-1-(5-phospho-D-ribosyl)imidazole-4-carboxylate + L-aspartate + ATP = (2S)-2-[5-amino-1-(5-phospho-beta-D-ribosyl)imidazole-4-carboxamido]succinate + ADP + phosphate + 2 H(+). It functions in the pathway purine metabolism; IMP biosynthesis via de novo pathway; 5-amino-1-(5-phospho-D-ribosyl)imidazole-4-carboxamide from 5-amino-1-(5-phospho-D-ribosyl)imidazole-4-carboxylate: step 1/2. The chain is Phosphoribosylaminoimidazole-succinocarboxamide synthase from Ehrlichia chaffeensis (strain ATCC CRL-10679 / Arkansas).